Consider the following 1026-residue polypeptide: Retinoblastoma-related protein 1 (1026 aa).

Positions 416–616 are domain A; sequence TPVSTAMTTA…EKGSSMYNSL (201 aa). Residues 416-872 are pocket; sequence TPVSTAMTTA…NEVFIPSVKP (457 aa). The segment at 617 to 737 is spacer; the sequence is AVARPALSVE…PGGGGETCAE (121 aa). Residues 656–680 are disordered; the sequence is PVPSLPKPEPMSAQNGDPRSPKRPC. Positions 738–872 are domain B; it reads TGISVFFSKI…NEVFIPSVKP (135 aa). Residues 1007 to 1026 are disordered; it reads QNGSSASSSGAPLKSEQPDS.

Belongs to the retinoblastoma protein (RB) family.

The protein localises to the nucleus. Regulator of biological processes that recruits a histone deacetylase to control gene transcription. May play a role in the entry into mitosis, negatively regulating the cell proliferation. Formation of stable complexes with geminiviridae replication-associated proteins may create a cellular environment which favors viral DNA replication. This Pisum sativum (Garden pea) protein is Retinoblastoma-related protein 1 (RBR1).